The following is a 924-amino-acid chain: Nodulation receptor kinase (924 aa).

The first 29 residues, 1-29 (MMELRVICIIRLVVACVLCLCIFIRSASS), serve as a signal peptide directing secretion. A coiled-coil region spans residues 361–382 (EVIQKMRKELLLQNQDNEALES). LRR repeat units lie at residues 406–428 (VITK…VTEM), 430–452 (KLQI…PPSS), 453–475 (LLIS…IISL), and 477–498 (HLNS…AKLN). Residues 520–540 (FMIGAITSGSILITLAVVILF) form a helical membrane-spanning segment. The Protein kinase domain maps to 595–872 (EKYKTLIGEG…IVRELEDALI (278 aa)). ATP contacts are provided by residues 601–609 (IGEGGFGSV) and K623. D721 (proton acceptor) is an active-site residue.

It belongs to the protein kinase superfamily. Ser/Thr protein kinase family. Post-translationally, may be phosphorylated.

The protein localises to the membrane. The catalysed reaction is L-seryl-[protein] + ATP = O-phospho-L-seryl-[protein] + ADP + H(+). The enzyme catalyses L-threonyl-[protein] + ATP = O-phospho-L-threonyl-[protein] + ADP + H(+). In terms of biological role, involved in the perception of symbiotic fungi and bacteria and required for the calcium spiking. Part of the perception/transduction system leading to nodulation or mycorrhizal infection. The polypeptide is Nodulation receptor kinase (NORK) (Pisum sativum (Garden pea)).